The following is a 210-amino-acid chain: Urease accessory protein UreF (210 aa).

It belongs to the UreF family. As to quaternary structure, ureD, UreF and UreG form a complex that acts as a GTP-hydrolysis-dependent molecular chaperone, activating the urease apoprotein by helping to assemble the nickel containing metallocenter of UreC. The UreE protein probably delivers the nickel.

It is found in the cytoplasm. In terms of biological role, required for maturation of urease via the functional incorporation of the urease nickel metallocenter. This is Urease accessory protein UreF from Cereibacter sphaeroides (strain ATCC 17025 / ATH 2.4.3) (Rhodobacter sphaeroides).